Reading from the N-terminus, the 172-residue chain is Myosin regulatory light polypeptide 9 (172 aa).

Positions 1–16 are enriched in basic residues; that stretch reads MSSKRAKTKTTKKRPQ. Positions 1–20 are disordered; sequence MSSKRAKTKTTKKRPQRATS. At serine 2 the chain carries N-acetylserine. Residue threonine 19 is modified to Phosphothreonine; by MLCK, CIT and ROCK2. Position 20 is a phosphoserine; by CDC42BP, CIT, MLCK, PAK1, ROCK1, ROCK2, DAPK1, DAPK2 and ZIPK/DAPK3 (serine 20). 3 EF-hand domains span residues 29–64, 98–133, and 134–169; these read SQIQ…LGKN, DPED…MGDR, and FTDE…GAKD. The Ca(2+) site is built by aspartate 42, asparagine 44, aspartate 46, and aspartate 53.

As to quaternary structure, myosin is a hexamer of 2 heavy chains and 4 light chains: interacts with myosin heavy chain MYO19. Interacts with LUZP1; the interaction results in inhibition of phosphorylation of MYL9 by DAPK3. In terms of processing, phosphorylation increases the actin-activated myosin ATPase activity and thereby regulates the contractile activity. It is required to generate the driving force in the migration of the cells but not necessary for localization of myosin-2 at the leading edge. Phosphorylation is required for myotube formation. Phosphorylated by DAPK3; DAPK3-mediated phosphorylation is inhibited by LUZP1.

The protein localises to the cytoplasm. The protein resides in the cytoskeleton. It is found in the cell cortex. Its function is as follows. Myosin regulatory subunit that plays an important role in regulation of both smooth muscle and nonmuscle cell contractile activity via its phosphorylation. Implicated in cytokinesis, receptor capping, and cell locomotion. In myoblasts, may regulate PIEZO1-dependent cortical actomyosin assembly involved in myotube formation. The polypeptide is Myosin regulatory light polypeptide 9 (MYL9) (Bos taurus (Bovine)).